The sequence spans 472 residues: Serine/threonine-protein kinase ULK3 (472 aa).

The Protein kinase domain maps to 14–270 (FILTERLGSG…FQDFFAHPWV (257 aa)). ATP is bound by residues 20–28 (LGSGTYATV) and Lys-44. Catalysis depends on Asp-137, which acts as the Proton acceptor. A Phosphoserine modification is found at Ser-176. The 69-residue stretch at 280 to 348 (SLGRATALVV…SRAEELKAIV (69 aa)) folds into the MIT 1 domain. Phosphoserine; by autocatalysis occurs at positions 300, 350, 384, and 464. The region spanning 375 to 444 (RLLAALEVAS…ARAEYLKEQV (70 aa)) is the MIT 2 domain.

This sequence belongs to the protein kinase superfamily. Ser/Thr protein kinase family. APG1/unc-51/ULK1 subfamily. As to quaternary structure, interacts (via protein kinase domain) with SUFU. Post-translationally, autophosphorylated. Autophosphorylation is blocked by interaction with SUFU. Widely expressed. Highest levels observed in fetal brain. In adult tissues, high levels in brain, liver and kidney, moderate levels in testis and adrenal gland and low levels in heart, lung, stomach, thymus, prostate and placenta. In the brain, highest expression in the hippocampus, high levels also detected in the cerebellum, olfactory bulb and optic nerve. In the central nervous system, lowest levels in the spinal cord.

It is found in the cytoplasm. It catalyses the reaction L-seryl-[protein] + ATP = O-phospho-L-seryl-[protein] + ADP + H(+). It carries out the reaction L-threonyl-[protein] + ATP = O-phospho-L-threonyl-[protein] + ADP + H(+). Serine/threonine protein kinase that acts as a regulator of Sonic hedgehog (SHH) signaling and autophagy. Acts as a negative regulator of SHH signaling in the absence of SHH ligand: interacts with SUFU, thereby inactivating the protein kinase activity and preventing phosphorylation of GLI proteins (GLI1, GLI2 and/or GLI3). Positively regulates SHH signaling in the presence of SHH: dissociates from SUFU, autophosphorylates and mediates phosphorylation of GLI2, activating it and promoting its nuclear translocation. Phosphorylates in vitro GLI2, as well as GLI1 and GLI3, although less efficiently. Also acts as a regulator of autophagy: following cellular senescence, able to induce autophagy. The protein is Serine/threonine-protein kinase ULK3 (ULK3) of Homo sapiens (Human).